The chain runs to 443 residues: GTPase Der (443 aa).

EngA-type G domains are found at residues 3-167 (PTLV…PEPE) and 176-349 (VRVA…AAAM). GTP contacts are provided by residues 9–16 (GRPNVGKS), 56–60 (DTGGF), 119–122 (NKAE), 182–189 (GRPNVGKS), 229–233 (DTAGM), and 294–297 (NKWD). Residues 350–434 (AKMTTPRLTR…PLRIQFVTAK (85 aa)) enclose the KH-like domain.

This sequence belongs to the TRAFAC class TrmE-Era-EngA-EngB-Septin-like GTPase superfamily. EngA (Der) GTPase family. In terms of assembly, associates with the 50S ribosomal subunit.

In terms of biological role, GTPase that plays an essential role in the late steps of ribosome biogenesis. This Dechloromonas aromatica (strain RCB) protein is GTPase Der.